The sequence spans 486 residues: UDP-N-acetylmuramate--L-alanine ligase (486 aa).

129-135 provides a ligand contact to ATP; the sequence is GTHGKTT.

This sequence belongs to the MurCDEF family.

The protein resides in the cytoplasm. The catalysed reaction is UDP-N-acetyl-alpha-D-muramate + L-alanine + ATP = UDP-N-acetyl-alpha-D-muramoyl-L-alanine + ADP + phosphate + H(+). The protein operates within cell wall biogenesis; peptidoglycan biosynthesis. Cell wall formation. The chain is UDP-N-acetylmuramate--L-alanine ligase from Vibrio vulnificus (strain CMCP6).